Here is a 339-residue protein sequence, read N- to C-terminus: Serpentine receptor class delta-32 (339 aa).

The next 7 helical transmembrane spans lie at 14–34 (AAVV…LIFF), 45–65 (VFLA…LLTV), 94–114 (IFTT…LSMV), 128–148 (SGAF…VVSI), 188–208 (LWVA…MFWC), 237–257 (ALTV…LIFL), and 269–289 (FGYI…LVTI).

This sequence belongs to the nematode receptor-like protein srd family.

The protein resides in the membrane. This chain is Serpentine receptor class delta-32 (srd-32), found in Caenorhabditis elegans.